The sequence spans 300 residues: Cation-efflux pump FieF (300 aa).

Transmembrane regions (helical) follow at residues 12–32 (AALS…FAWW), 40–60 (LAAL…LFVV), 82–102 (AALA…LTGF), and 114–134 (PGLG…LVTF). Zn(2+) contacts are provided by Asp-45 and Asp-49. Residues His-153 and Asp-157 each contribute to the Zn(2+) site. A helical transmembrane segment spans residues 164–184 (ILIALALSWYGFHRADALFAL).

The protein belongs to the cation diffusion facilitator (CDF) transporter (TC 2.A.4) family. FieF subfamily. As to quaternary structure, homodimer.

It is found in the cell inner membrane. It carries out the reaction Zn(2+)(in) + H(+)(out) = Zn(2+)(out) + H(+)(in). The catalysed reaction is Cd(2+)(in) + H(+)(out) = Cd(2+)(out) + H(+)(in). It catalyses the reaction Fe(2+)(in) + H(+)(out) = Fe(2+)(out) + H(+)(in). Its function is as follows. Divalent metal cation transporter which exports Zn(2+), Cd(2+) and possibly Fe(2+). May be involved in zinc and iron detoxification by efflux. The chain is Cation-efflux pump FieF from Yersinia enterocolitica serotype O:8 / biotype 1B (strain NCTC 13174 / 8081).